The sequence spans 986 residues: Leucine-rich repeat receptor-like kinase protein HAR1 (986 aa).

The signal sequence occupies residues Met1 to Ser25. LRR repeat units follow at residues Asp71–Leu97, Glu98–Leu121, Ser123–Gly145, Met146–Leu170, Glu171–Ser196, Glu198–Leu218, Met243–Leu267, Thr268–Met291, Ser293–Lys314, Lys316–Leu339, Pro340–Asn363, Arg365–Ser387, Gly388–Cys411, Arg412–Leu435, Ser437–Gly458, Glu459–Leu482, Arg483–Ile506, Met508–Arg530, Ala531–Leu554, Met555–Met578, and Thr579–Val603. Asn80, Asn102, Asn109, Asn128, and Asn141 each carry an N-linked (GlcNAc...) asparagine glycan. Residues Asn255, Asn266, and Asn279 are each glycosylated (N-linked (GlcNAc...) asparagine). N-linked (GlcNAc...) asparagine glycans are attached at residues Asn317 and Asn351. 2 N-linked (GlcNAc...) asparagine glycosylation sites follow: Asn513 and Asn518. Residues Asn561 and Asn590 are each glycosylated (N-linked (GlcNAc...) asparagine). Residues Ile645–Val665 form a helical membrane-spanning segment. The 277-residue stretch at Leu695–Thr971 folds into the Protein kinase domain. Residues Ile701–Val709 and Lys723 contribute to the ATP site. Residue Asp820 is the Proton acceptor of the active site.

This sequence belongs to the protein kinase superfamily. Ser/Thr protein kinase family. Expressed in roots, leaves, stems and flowers.

It is found in the cell membrane. The catalysed reaction is L-seryl-[protein] + ATP = O-phospho-L-seryl-[protein] + ADP + H(+). It catalyses the reaction L-threonyl-[protein] + ATP = O-phospho-L-threonyl-[protein] + ADP + H(+). In terms of biological role, LRR receptor kinase involved in the regulation of root and shoot growth, and root nodule organogenesis. Involved in long distance nodulation signaling events. Involved in the autoregulation of nodulation (AON), a long distance systemic signaling from root to shoot and back again, which allows legumes to limit the number of root nodules formed based on available nitrogen and previous rhizobial colonization. Acts from shoot to root to control AON. Involved in the regulation of root colonization by arbuscular mycorrhizal (AM) fungi. This chain is Leucine-rich repeat receptor-like kinase protein HAR1, found in Lotus japonicus (Lotus corniculatus var. japonicus).